Reading from the N-terminus, the 515-residue chain is Putative ribose/galactose/methyl galactoside import ATP-binding protein (515 aa).

2 ABC transporter domains span residues 26–262 and 272–511; these read LEVA…VGRE and VALG…KIMD. ATP is bound at residue 58-65; sequence GENGAGKS.

Belongs to the ABC transporter superfamily. Carbohydrate importer 2 (CUT2) (TC 3.A.1.2) family.

It is found in the cell inner membrane. The enzyme catalyses D-ribose(out) + ATP + H2O = D-ribose(in) + ADP + phosphate + H(+). It carries out the reaction D-galactose(out) + ATP + H2O = D-galactose(in) + ADP + phosphate + H(+). Functionally, part of an ABC transporter complex involved in carbohydrate import. Could be involved in ribose, galactose and/or methyl galactoside import. Responsible for energy coupling to the transport system. The protein is Putative ribose/galactose/methyl galactoside import ATP-binding protein of Hahella chejuensis (strain KCTC 2396).